A 213-amino-acid chain; its full sequence is Serine acetyltransferase (213 aa).

This sequence belongs to the transferase hexapeptide repeat family.

The protein resides in the cytoplasm. It catalyses the reaction L-serine + acetyl-CoA = O-acetyl-L-serine + CoA. It functions in the pathway amino-acid biosynthesis; L-cysteine biosynthesis; L-cysteine from L-serine: step 1/2. This Staphylococcus aureus (strain COL) protein is Serine acetyltransferase (cysE).